Consider the following 547-residue polypeptide: uncharacterized protein (547 aa).

12 helical membrane-spanning segments follow: residues 33–53, 107–127, 145–165, 203–223, 231–251, 263–283, 298–318, 351–371, 397–417, 432–452, 470–490, and 499–519; these read PTFFFALFSAAYVFIDQIMVI, PLIVLLNAINIFIPLGTGVIF, TGLISTTVFGLITQFLVLSFA, VYILIGLNIIPMLSRLFFYLA, FIAIVPPIANLINILIVFLLV, VAGILGYLINFLAYIIYLIYL, LNKIDFNLLVVVSLIGMASFF, TLLTGPIAISNLASAAIFGLL, TVIICISFGSLIYLLTAVAFG, LDLANYFSLIVQAQVFFVATG, IVSLTHGLFVFIPLLFIFQAI, and VFIWLLTANAALAGLINIAFG.

The protein localises to the cell membrane. This is an uncharacterized protein from Mycoplasma genitalium (strain ATCC 33530 / DSM 19775 / NCTC 10195 / G37) (Mycoplasmoides genitalium).